Consider the following 329-residue polypeptide: Formimidoylglutamase (329 aa).

Residues His133, Asp159, His161, Asp163, Asp253, and Asp255 each coordinate Mn(2+).

It belongs to the arginase family. It depends on Mn(2+) as a cofactor.

It catalyses the reaction N-formimidoyl-L-glutamate + H2O = formamide + L-glutamate. It functions in the pathway amino-acid degradation; L-histidine degradation into L-glutamate; L-glutamate from N-formimidoyl-L-glutamate (hydrolase route): step 1/1. Catalyzes the conversion of N-formimidoyl-L-glutamate to L-glutamate and formamide. The sequence is that of Formimidoylglutamase from Streptococcus gordonii (strain Challis / ATCC 35105 / BCRC 15272 / CH1 / DL1 / V288).